The chain runs to 97 residues: Aspartyl/glutamyl-tRNA(Asn/Gln) amidotransferase subunit C (97 aa).

It belongs to the GatC family. As to quaternary structure, heterotrimer of A, B and C subunits.

The catalysed reaction is L-glutamyl-tRNA(Gln) + L-glutamine + ATP + H2O = L-glutaminyl-tRNA(Gln) + L-glutamate + ADP + phosphate + H(+). The enzyme catalyses L-aspartyl-tRNA(Asn) + L-glutamine + ATP + H2O = L-asparaginyl-tRNA(Asn) + L-glutamate + ADP + phosphate + 2 H(+). In terms of biological role, allows the formation of correctly charged Asn-tRNA(Asn) or Gln-tRNA(Gln) through the transamidation of misacylated Asp-tRNA(Asn) or Glu-tRNA(Gln) in organisms which lack either or both of asparaginyl-tRNA or glutaminyl-tRNA synthetases. The reaction takes place in the presence of glutamine and ATP through an activated phospho-Asp-tRNA(Asn) or phospho-Glu-tRNA(Gln). The chain is Aspartyl/glutamyl-tRNA(Asn/Gln) amidotransferase subunit C from Cyanothece sp. (strain PCC 7425 / ATCC 29141).